Consider the following 135-residue polypeptide: Succinate dehydrogenase assembly factor 3, mitochondrial (135 aa).

Residues 1–12 (MRIFTRLLYAAP) constitute a mitochondrion transit peptide.

Belongs to the complex I LYR family. SDHAF3 subfamily. Interacts with the iron-sulfur protein subunit within the SDH catalytic dimer.

The protein localises to the mitochondrion matrix. Plays an essential role in the assembly of succinate dehydrogenase (SDH), an enzyme complex (also referred to as respiratory complex II) that is a component of both the tricarboxylic acid (TCA) cycle and the mitochondrial electron transport chain, and which couples the oxidation of succinate to fumarate with the reduction of ubiquinone (coenzyme Q) to ubiquinol. Promotes maturation of the iron-sulfur protein subunit of the SDH catalytic dimer, protecting it from the deleterious effects of oxidants. May act together with SDHAF1. The chain is Succinate dehydrogenase assembly factor 3, mitochondrial from Emericella nidulans (strain FGSC A4 / ATCC 38163 / CBS 112.46 / NRRL 194 / M139) (Aspergillus nidulans).